A 188-amino-acid polypeptide reads, in one-letter code: Ion-translocating oxidoreductase complex subunit B (188 aa).

The segment at 1–26 is hydrophobic; the sequence is MNGVFLAIGALLPICLAGGALLGYAA. A 4Fe-4S domain is found at 32–90; the sequence is QGDPVAEQVNALLPQTQCGQCGYPGCKPYAEAIAAGDKINKCPPGGEATIRALADLLDL. Residues Cys-49, Cys-52, Cys-57, Cys-73, Cys-113, Cys-116, Cys-119, Cys-123, Cys-143, Cys-146, Cys-149, and Cys-153 each coordinate [4Fe-4S] cluster. 2 consecutive 4Fe-4S ferredoxin-type domains span residues 104 to 133 and 134 to 163; these read RVAY…GAAR and LMHT…MREI.

It belongs to the 4Fe4S bacterial-type ferredoxin family. RnfB subfamily. The complex is composed of six subunits: RnfA, RnfB, RnfC, RnfD, RnfE and RnfG. [4Fe-4S] cluster is required as a cofactor.

The protein localises to the cell inner membrane. In terms of biological role, part of a membrane-bound complex that couples electron transfer with translocation of ions across the membrane. This is Ion-translocating oxidoreductase complex subunit B from Pseudomonas aeruginosa (strain LESB58).